A 317-amino-acid polypeptide reads, in one-letter code: Acetyl-coenzyme A carboxylase carboxyl transferase subunit alpha (317 aa).

One can recognise a CoA carboxyltransferase C-terminal domain in the interval 33-294 (NLDDEITRLQ…KKRLLADLAD (262 aa)).

This sequence belongs to the AccA family. Acetyl-CoA carboxylase is a heterohexamer composed of biotin carboxyl carrier protein (AccB), biotin carboxylase (AccC) and two subunits each of ACCase subunit alpha (AccA) and ACCase subunit beta (AccD).

It is found in the cytoplasm. It carries out the reaction N(6)-carboxybiotinyl-L-lysyl-[protein] + acetyl-CoA = N(6)-biotinyl-L-lysyl-[protein] + malonyl-CoA. It functions in the pathway lipid metabolism; malonyl-CoA biosynthesis; malonyl-CoA from acetyl-CoA: step 1/1. Component of the acetyl coenzyme A carboxylase (ACC) complex. First, biotin carboxylase catalyzes the carboxylation of biotin on its carrier protein (BCCP) and then the CO(2) group is transferred by the carboxyltransferase to acetyl-CoA to form malonyl-CoA. This Histophilus somni (strain 129Pt) (Haemophilus somnus) protein is Acetyl-coenzyme A carboxylase carboxyl transferase subunit alpha.